The primary structure comprises 188 residues: UPF0461 protein C5orf24 homolog (188 aa).

A Phosphoserine modification is found at Ser-37. A Glycyl lysine isopeptide (Lys-Gly) (interchain with G-Cter in SUMO2) cross-link involves residue Lys-75. Residues 79–142 (KKKKNLNRSG…GYKVSPGRPP (64 aa)) form a disordered region. Positions 80–92 (KKKNLNRSGKRGR) are enriched in basic residues. Polar residues predominate over residues 94-107 (SGTTKSAGYRTSTG). Residues Ser-121 and Ser-180 each carry the phosphoserine modification. Lys-184 is covalently cross-linked (Glycyl lysine isopeptide (Lys-Gly) (interchain with G-Cter in SUMO2)).

It belongs to the UPF0461 family.

In Bos taurus (Bovine), this protein is UPF0461 protein C5orf24 homolog.